The sequence spans 131 residues: MDFQQLADVAEKWCSNTPFELIATEETERRMDFYADPGVSFYVLCPDNGCGDNFHVWSESEDCLPFLQLAQDYISSCGKKTLHEVLEKVFKSFRPLLGLPDADDDAFEEYSADVEEEEPEADHPQMGVSQQ.

Residue tyrosine 34 is modified to Phosphotyrosine. A compositionally biased stretch (acidic residues) spans 107 to 120 (FEEYSADVEEEEPE). Residues 107 to 131 (FEEYSADVEEEEPEADHPQMGVSQQ) form a disordered region.

The protein belongs to the MTURN family. Phosphorylation at Tyr-34 is essential for its ability to promote megakaryocyte differentiation.

It localises to the cytoplasm. Its function is as follows. Promotes megakaryocyte differentiation by enhancing ERK and JNK signaling as well as up-regulating RUNX1 and FLI1 expression. Represses NF-kappa-B transcriptional activity by inhibiting phosphorylation of RELA at 'Ser- 536'. May be involved in early neuronal development. In Bos taurus (Bovine), this protein is Maturin (MTURN).